The primary structure comprises 92 residues: MALAEKFNLQDRFLNHLRVNKIEVKVYLVNGFQTKGFIRSFDSYTVLLESGNQQSLIYKHAISTIIPSSYVMLMPKKQETAQEAETSENEGS.

The 61-residue stretch at 11 to 71 folds into the Sm domain; it reads DRFLNHLRVN…ISTIIPSSYV (61 aa).

The protein belongs to the Hfq family. Homohexamer.

In terms of biological role, RNA chaperone that binds small regulatory RNA (sRNAs) and mRNAs to facilitate mRNA translational regulation in response to envelope stress, environmental stress and changes in metabolite concentrations. Also binds with high specificity to tRNAs. In Thermotoga maritima (strain ATCC 43589 / DSM 3109 / JCM 10099 / NBRC 100826 / MSB8), this protein is RNA-binding protein Hfq.